We begin with the raw amino-acid sequence, 144 residues long: Noggin (144 aa).

The signal sequence occupies residues 1–4 (GGGG). Intrachain disulfides connect cysteine 67–cysteine 104, cysteine 90–cysteine 140, cysteine 96–cysteine 142, and cysteine 119–cysteine 127.

It belongs to the noggin family. Homodimer. Interacts with GDF5; inhibits chondrocyte differentiation. As to expression, prominently expressed in the CNS. High levels found in mitral and tufted cells in the olfactory bulb, piriform cortex of the brain and Purkinje cells in the cerebellum. Low level expression seen in the lung, skeletal muscle and skin.

It is found in the secreted. In terms of biological role, essential for cartilage morphogenesis and joint formation. Inhibitor of bone morphogenetic proteins (BMP) signaling which is required for growth and patterning of the neural tube and somite. Inhibits chondrocyte differentiation through its interaction with GDF5 and, probably, GDF6. The sequence is that of Noggin (Nog) from Rattus norvegicus (Rat).